The primary structure comprises 193 residues: uncharacterized protein (193 aa).

This is an uncharacterized protein from Archaeoglobus fulgidus (strain ATCC 49558 / DSM 4304 / JCM 9628 / NBRC 100126 / VC-16).